We begin with the raw amino-acid sequence, 586 residues long: Paxillin (586 aa).

Met1 carries the N-acetylmethionine modification. The short motif at 3–15 (DLDALLADLESTT) is the LD motif 1 element. Residues 13–138 (STTSHISKRP…PSPTVMSSSL (126 aa)) form a disordered region. At Tyr31 the chain carries Phosphotyrosine; by PTK6. Residues 45–54 (VPPPVPPPPS) are compositionally biased toward pro residues. 2 positions are modified to phosphoserine: Ser83 and Ser85. Low complexity predominate over residues 86–98 (PIYSSSTKNSSAS). Tyr88 is subject to Phosphotyrosine. Ser106 is modified (phosphoserine). Tyr118 is modified (phosphotyrosine; by PTK6). Phosphoserine is present on residues Ser119, Ser126, and Ser130. Positions 121–137 (PNKQKSAEPSPTVMSSS) are enriched in polar residues. Thr132 bears the Phosphothreonine mark. Ser137, Ser140, and Ser143 each carry phosphoserine. The LD motif 2 signature appears at 144–156 (ELDRLLLELNAVQ). Tyr210 carries the post-translational modification Phosphotyrosine. The disordered stretch occupies residues 220–241 (GGKAGPLMKEKPKRNGGRGLED). The LD motif 3 signature appears at 245 to 257 (SVESLLDELENSV). Phosphoserine is present on Ser259. The disordered stretch occupies residues 266–290 (VNQGEMSSPQRVTSSQQQTRISASS). At Ser273 the chain carries Phosphoserine; by CDK5. Residues Ser279, Ser287, Ser290, Ser301, Ser317, Ser327, and Ser335 each carry the phosphoserine modification. The interval 291 to 310 (ATRELDELMASLSDFKFMAQ) is required for binding to PARVA and ILK. Positions 294–305 (ELDELMASLSDF) match the LD motif 4 motif. Positions 309 to 329 (AQGKTGSSSPPGGLSKPGSQL) are disordered. A compositionally biased stretch (low complexity) spans 310-329 (QGKTGSSSPPGGLSKPGSQL). The LD motif 5 motif lies at 328–340 (QLDSMLGSLQSDL). LIM zinc-binding domains are found at residues 353–403 (CGAC…CEKD), 412–462 (CYYC…CRKD), and 471–521 (CGGC…CEVH). At Ser528 the chain carries Phosphoserine. In terms of domain architecture, LIM zinc-binding 4 spans 530–580 (CSGCQKPITGRCITAMAKKFHPEHFVCAFCLKQLNKGTFKEQNDKPYCQSC).

It belongs to the paxillin family. As to quaternary structure, interacts in vitro with VCL/vinculin as well as to the SH3 domain of SRC and, when tyrosine phosphorylated, to the SH2 domain of CRK. Interacts with GIT1. Interacts with NUDT16L1/SDOS. Interacts with PTK2/FAK1. Interacts with PTK2B/PYK2. Interacts with ASAP2. Interacts with unphosphorylated ITGA4. Interacts with RNF5. Interacts with PDCD10. Interacts with NEK3, the interaction is prolactin-dependent. Interacts with PTK6. Interacts with TGFB1I1. Interacts with SORBS1. Interacts with PARVB. Interacts (via LD motif 4) with PARVA/PARVIN. Interacts (via LD motif 4) with ILK. Interacts (via cytoplasmic domain) with CEACAM1; the interaction is phosphotyrosyl-dependent. Interacts with LIMA1; this complex stabilizes actin dynamics. Interacts with CD36 (via C-terminus). Interacts with TRIM15. Interacts with PAK4; PAK4 acts as a scaffold to suppport PAXI phosphorylation at Ser-301. Phosphorylated by MAPK1/ERK2. Phosphorylated on tyrosine residues during integrin-mediated cell adhesion, embryonic development, fibroblast transformation and following stimulation of cells by mitogens. Phosphorylation at Ser-273 by CDK5 reduces its interaction with PTK2/FAK1 in matrix-cell focal adhesions (MCFA) during oligodendrocytes (OLs) differentiation. Phosphorylation at Tyr-31 and Tyr-118 by PTK6 promote the activation of RAC1 via CRK/CrKII, thereby promoting migration and invasion. Phosphorylation at Ser-279 by SLK is required for PXN redistribution and cell motility. Phosphorylation at Ser-301 promotes focal adhesion disassembly during cell migration.

It is found in the cytoplasm. The protein resides in the cytoskeleton. The protein localises to the cell junction. It localises to the focal adhesion. Its subcellular location is the cell cortex. Functionally, cytoskeletal protein involved in actin-membrane attachment at sites of cell adhesion to the extracellular matrix (focal adhesion). Recruits other proteins such as TRIM15 to focal adhesion. This chain is Paxillin, found in Rattus norvegicus (Rat).